The sequence spans 224 residues: uncharacterized protein (224 aa).

An HTH gntR-type domain is found at 10–77 (TPYYLQFYNQ…DRNGFSITSL (68 aa)). The segment at residues 37-56 (ETQLAKSFGVSRSPIREAMR) is a DNA-binding region (H-T-H motif).

This is an uncharacterized protein from Bacillus subtilis (strain 168).